A 371-amino-acid polypeptide reads, in one-letter code: 3-isopropylmalate dehydrogenase (371 aa).

Substrate is bound by residues R104, R114, R142, and D232. Residues D232, D256, and D260 each contribute to the Mg(2+) site. Residue G290–N302 participates in NAD(+) binding.

This sequence belongs to the isocitrate and isopropylmalate dehydrogenases family. LeuB type 1 subfamily. In terms of assembly, homodimer. Mg(2+) serves as cofactor. It depends on Mn(2+) as a cofactor.

The protein resides in the cytoplasm. It catalyses the reaction (2R,3S)-3-isopropylmalate + NAD(+) = 4-methyl-2-oxopentanoate + CO2 + NADH. The protein operates within amino-acid biosynthesis; L-leucine biosynthesis; L-leucine from 3-methyl-2-oxobutanoate: step 3/4. Its function is as follows. Catalyzes the oxidation of 3-carboxy-2-hydroxy-4-methylpentanoate (3-isopropylmalate) to 3-carboxy-4-methyl-2-oxopentanoate. The product decarboxylates to 4-methyl-2 oxopentanoate. This Synechococcus sp. (strain JA-2-3B'a(2-13)) (Cyanobacteria bacterium Yellowstone B-Prime) protein is 3-isopropylmalate dehydrogenase.